Consider the following 333-residue polypeptide: D-fructose 1,6-bisphosphatase class 2/sedoheptulose 1,7-bisphosphatase (333 aa).

Mn(2+)-binding residues include Asp33, Glu57, Asp85, and Glu88. Substrate is bound by residues 88–90 (EGT), Tyr119, 164–166 (RTR), and 186–188 (DGD). Glu213 serves as a coordination point for Mn(2+).

The protein belongs to the FBPase class 2 family. Homotetramer. Mn(2+) is required as a cofactor.

It catalyses the reaction beta-D-fructose 1,6-bisphosphate + H2O = beta-D-fructose 6-phosphate + phosphate. It carries out the reaction D-sedoheptulose 1,7-bisphosphate + H2O = D-sedoheptulose 7-phosphate + phosphate. It participates in carbohydrate biosynthesis; Calvin cycle. Its function is as follows. Catalyzes the hydrolysis of fructose 1,6-bisphosphate (Fru 1,6-P2) and sedoheptulose 1,7-bisphosphate (Sed 1,7-P2) to fructose 6-phosphate and sedoheptulose 7-phosphate, respectively. The sequence is that of D-fructose 1,6-bisphosphatase class 2/sedoheptulose 1,7-bisphosphatase from Prochlorococcus marinus (strain MIT 9301).